Consider the following 556-residue polypeptide: mRNA-capping enzyme subunit beta (556 aa).

Disordered regions lie at residues 1 to 28 and 56 to 217; these read MKPSRGLSLTDLVNHDDAPPLNNGDNNV and LPPV…QKTS. Polar residues predominate over residues 63 to 74; it reads VSTSDTGNTSHT. The segment covering 85 to 96 has biased composition (acidic residues); sequence ESDETDTDDEPG. Composition is skewed to basic and acidic residues over residues 103–131 and 139–212; these read TKFRFDDEEQQPQKDKLVKGTSSEKKDKQ and IQLD…KDIF.

It belongs to the fungal TPase family. As to quaternary structure, heterodimer. The mRNA-capping enzyme is composed of two separate chains alpha and beta, respectively a mRNA guanylyltransferase and an mRNA 5'-triphosphate monophosphatase. The cofactor is Mg(2+).

It localises to the nucleus. The catalysed reaction is a 5'-end triphospho-ribonucleoside in mRNA + H2O = a 5'-end diphospho-ribonucleoside in mRNA + phosphate + H(+). In terms of biological role, first step of mRNA capping. Converts the 5'-triphosphate end of a nascent mRNA chain into a diphosphate end. This is mRNA-capping enzyme subunit beta (CET1) from Kluyveromyces lactis (strain ATCC 8585 / CBS 2359 / DSM 70799 / NBRC 1267 / NRRL Y-1140 / WM37) (Yeast).